Consider the following 565-residue polypeptide: Heme/hemopexin transporter protein HuxB (565 aa).

Positions 1–26 (MKMRPRYSVIASAVSLGFVLSKSVMA) are cleaved as a signal peptide. The region spanning 73–150 (FPLTQVQILD…GTVKILLLKG (78 aa)) is the POTRA domain.

Belongs to the TPS (TC 1.B.20) family.

It is found in the cell outer membrane. Functionally, likely functions in the release of soluble HxuA from the cell. Probable member of a two partner secretion pathway (TPS) in which it mediates the secretion of HuxA. The polypeptide is Heme/hemopexin transporter protein HuxB (hxuB) (Haemophilus influenzae).